Consider the following 1012-residue polypeptide: MTNLQDQTQQIVPFIRSLLMPTTGPASIPDDTLEKHTLRSETSTYNLTVGDTGSGLIVFFPGFPGSIVGAHYTLQSNGNYKFDQMLLTAQNLPASYNYCRLVSRSLTVRSSTLPGGVYALNGTINAVTFQGSLSELTDVSYNGLMSATANINDKIGNVLVGEGVTVLSLPTSYDLGYVRLGDPIPAIGLDPKMVATCDSSDRPRVYTITAADDYQFSSQYQPGGVTITLFSANIDAITSLSIGGELVFQTSVQGLVLGATIYLIGFDGTAVITRAVAADNGLTAGTDNLMPFNLVIPTNEITQPITSIKLEIVTSKSGGQAGDQMSWSASGSLAVTIHGGNYPGALRPVTLVAYERVATGSVVTVAGVSNFELIPNPELAKNLVTEYGRFDPGAMNYTKLILSERDRLGIKTVWPTREYTDFREYFMEVADLNSPLKIAGAFGFKDIIRAIRRIAVPVVSTLFPPAAPLAHAIGEGVDYLLGDEAQAASGTARAASGKARAASGRIRQLTLAADKGYEVVANLFQVPQNPVVDGILASPGVLRGAHNLDCVLREGATLFPVVITTVEDAMTPKALNSKMFAVIEGVREDLQPPSQRGSFIRTLSGHRVYGYAPDGVLPLETGRDYTVVPIDDVWDDSIMLSKDPIPPIVGNSGNLAIAYMDVFRPKVPIHVAMTGAPNACGEIEKISFRSTKLATAHRLGLKLAGPGAFDVNTGPNWATFIKRFPHNPRDWDRLPYLNLPYLPPNAGRQYHLAMAASEFKDTPELESAVRAMEAAANVDSLFQSALSVFMWLEENGIVTDMANFTLSDPNAHRMRNFLANAPQAGSKSQRAKYGTAGYGVEARGPTPEEAQRKKDTRISKKMETMGIYFATPEWVALNGHRGPSPGQLKYWQNTREIPDPNEDYLDYVHAEKSRLASDEQILRAATSIYGAPGQAEPPQAFIDEVAKVYEINHGRGPNQEQMKDLLLTAMEMKHRNPRRAPPKPKPKPNAPTQRPPGRLGRWIRTVSDEDLE.

Position 30 (Asp-30) interacts with a divalent metal cation. The 243-residue stretch at 513–755 (ADKGYEVVAN…AGRQYHLAMA (243 aa)) folds into the Peptidase S50 domain. Catalysis depends on Ser-652, which acts as the Nucleophile. Lys-692 is an active-site residue. Disordered regions lie at residues 837–857 (GYGV…KDTR) and 968–1012 (TAME…EDLE). Basic residues predominate over residues 975-986 (RNPRRAPPKPKP). The segment at 1003-1012 (IRTVSDEDLE) is interaction with VP1 protein.

Homotrimer. A central divalent metal stabilizes the VP2 trimer. Interacts with host ITGA4/ITGB1. In terms of assembly, homodimer. Interacts (via C-terminus) with VP1 in the cytoplasm. Interacts with VP2. Specific enzymatic cleavages yield mature proteins. The capsid assembly seems to be regulated by polyprotein processing. The protease VP4 cleaves itself off the polyprotein, thus releasing pre-VP2 and VP3 within the infected cell. During capsid assembly, the C-terminus of pre-VP2 is further processed by VP4, giving rise to VP2, the external capsid protein and three small peptides that all stay closely associated with the capsid.

The protein localises to the virion. It is found in the host cytoplasm. Functionally, capsid protein VP2 self assembles to form an icosahedral capsid with a T=13 symmetry, about 70 nm in diameter, and consisting of 260 VP2 trimers. The capsid encapsulates the genomic dsRNA. VP2 is also involved in attachment and entry into the host cell by interacting with host ITGA4/ITGB1. In terms of biological role, the precursor of VP2 plays an important role in capsid assembly. First, pre-VP2 and VP2 oligomers assemble to form a procapsid. Then, the pre-VP2 intermediates may be processed into VP2 proteins by proteolytic cleavage mediated by VP4 to obtain the mature virion. The final capsid is composed of pentamers and hexamers but VP2 has a natural tendency to assemble into all-pentameric structures. Therefore pre-VP2 may be required to allow formation of the hexameric structures. Its function is as follows. Protease VP4 is a serine protease that cleaves the polyprotein into its final products. Pre-VP2 is first partially cleaved, and may be completely processed by VP4 upon capsid maturation. Capsid protein VP3 plays a key role in virion assembly by providing a scaffold for the capsid made of VP2. May self-assemble to form a T=4-like icosahedral inner-capsid composed of at least 180 trimers. Plays a role in genomic RNA packaging by recruiting VP1 into the capsid and interacting with the dsRNA genome segments to form a ribonucleoprotein complex. Additionally, the interaction of the VP3 C-terminal tail with VP1 removes the inherent structural blockade of the polymerase active site. Thus, VP3 can also function as a transcriptional activator. Functionally, structural peptide 1 is a small peptide derived from pre-VP2 C-terminus. It destabilizes and perforates cell membranes, suggesting a role during entry. In terms of biological role, structural peptide 2 is a small peptide derived from pVP2 C-terminus. It is not essential for the virus viability, but viral growth is affected when missing. Its function is as follows. Structural peptide 3 is a small peptide derived from pVP2 C-terminus. It is not essential for the virus viability, but viral growth is affected when missing. Structural peptide 4 is a small peptide derived from pVP2 C-terminus. It is essential for the virus viability. This Gallus gallus (Chicken) protein is Structural polyprotein.